The sequence spans 430 residues: Enolase (430 aa).

Residue Q167 participates in (2R)-2-phosphoglycerate binding. Residue E209 is the Proton donor of the active site. 3 residues coordinate Mg(2+): D246, E287, and D314. Residues K339, R368, S369, and K390 each contribute to the (2R)-2-phosphoglycerate site. The active-site Proton acceptor is K339.

Belongs to the enolase family. The cofactor is Mg(2+).

The protein resides in the cytoplasm. It is found in the secreted. It localises to the cell surface. The enzyme catalyses (2R)-2-phosphoglycerate = phosphoenolpyruvate + H2O. The protein operates within carbohydrate degradation; glycolysis; pyruvate from D-glyceraldehyde 3-phosphate: step 4/5. In terms of biological role, catalyzes the reversible conversion of 2-phosphoglycerate (2-PG) into phosphoenolpyruvate (PEP). It is essential for the degradation of carbohydrates via glycolysis. This is Enolase from Prochlorococcus marinus (strain MIT 9301).